The primary structure comprises 222 residues: Ribosomal RNA small subunit methyltransferase G (222 aa).

S-adenosyl-L-methionine is bound by residues Gly-84, Phe-89, Val-141 to Glu-142, and Arg-154.

This sequence belongs to the methyltransferase superfamily. RNA methyltransferase RsmG family.

The protein resides in the cytoplasm. It catalyses the reaction guanosine(527) in 16S rRNA + S-adenosyl-L-methionine = N(7)-methylguanosine(527) in 16S rRNA + S-adenosyl-L-homocysteine. In terms of biological role, specifically methylates the N7 position of guanine in position 527 of 16S rRNA. The polypeptide is Ribosomal RNA small subunit methyltransferase G (Bradyrhizobium sp. (strain ORS 278)).